Consider the following 664-residue polypeptide: Chaperone protein DnaK (664 aa).

Thr201 bears the Phosphothreonine; by autocatalysis mark. Residues 574–592 show a composition bias toward basic and acidic residues; the sequence is LKEDASTEKIKEASEELSR. Residues 574 to 664 are disordered; it reads LKEDASTEKI…DVEIVDKPND (91 aa). Over residues 600-617 the composition is skewed to low complexity; the sequence is AMQSQSASAAPSSAANAQ. Positions 639–649 are enriched in polar residues; the sequence is GNSTSASSNNE.

This sequence belongs to the heat shock protein 70 family.

Functionally, acts as a chaperone. The protein is Chaperone protein DnaK of Chlamydia felis (strain Fe/C-56) (Chlamydophila felis).